A 350-amino-acid chain; its full sequence is Small ribosomal subunit biogenesis GTPase RsgA (350 aa).

Residues Met-1–Lys-30 are disordered. A compositionally biased stretch (polar residues) spans Thr-7–Lys-20. Positions Thr-21–Lys-30 are enriched in basic residues. The CP-type G domain maps to His-106 to Phe-274. GTP is bound by residues Asn-162–Asp-165 and Gly-216–Ser-224. Residues Cys-298, Cys-303, His-305, and Cys-311 each contribute to the Zn(2+) site.

Belongs to the TRAFAC class YlqF/YawG GTPase family. RsgA subfamily. In terms of assembly, monomer. Associates with 30S ribosomal subunit, binds 16S rRNA. Requires Zn(2+) as cofactor.

Its subcellular location is the cytoplasm. In terms of biological role, one of several proteins that assist in the late maturation steps of the functional core of the 30S ribosomal subunit. Helps release RbfA from mature subunits. May play a role in the assembly of ribosomal proteins into the subunit. Circularly permuted GTPase that catalyzes slow GTP hydrolysis, GTPase activity is stimulated by the 30S ribosomal subunit. This is Small ribosomal subunit biogenesis GTPase RsgA from Histophilus somni (strain 2336) (Haemophilus somnus).